The sequence spans 34 residues: Photosystem II reaction center protein T (34 aa).

Residues 3-23 (ALVYTFLLVSTLGIIFFAIFF) form a helical membrane-spanning segment.

This sequence belongs to the PsbT family. In terms of assembly, PSII is composed of 1 copy each of membrane proteins PsbA, PsbB, PsbC, PsbD, PsbE, PsbF, PsbH, PsbI, PsbJ, PsbK, PsbL, PsbM, PsbT, PsbY, PsbZ, Psb30/Ycf12, at least 3 peripheral proteins of the oxygen-evolving complex and a large number of cofactors. It forms dimeric complexes.

The protein localises to the plastid. The protein resides in the chloroplast thylakoid membrane. In terms of biological role, found at the monomer-monomer interface of the photosystem II (PS II) dimer, plays a role in assembly and dimerization of PSII. PSII is a light-driven water plastoquinone oxidoreductase, using light energy to abstract electrons from H(2)O, generating a proton gradient subsequently used for ATP formation. The chain is Photosystem II reaction center protein T from Atropa belladonna (Belladonna).